The primary structure comprises 248 residues: Proteasome subunit alpha type-7 (248 aa).

The O-linked (GlcNAc) serine glycan is linked to Ser-130. Tyr-153 is modified (phosphotyrosine; by ABL1 and ABL2). Residue Lys-227 is modified to N6-acetyllysine.

The protein belongs to the peptidase T1A family. In terms of assembly, the 26S proteasome consists of a 20S proteasome core and two 19S regulatory subunits. The 20S proteasome core is a barrel-shaped complex made of 28 subunits that are arranged in four stacked rings. The two outer rings are each formed by seven alpha subunits, and the two inner rings are formed by seven beta subunits. The proteolytic activity is exerted by three beta-subunits PSMB5, PSMB6 and PSMB7. PSMA7 interacts directly with the PSMG1-PSMG2 heterodimer which promotes 20S proteasome assembly. Interacts with HIF1A. Interacts with RAB7A. Interacts with PRKN. Interacts with ABL1 and ABL2. Interacts with EMAP2. Interacts with MAVS. Phosphorylation by ABL1 or ABL2 leads to an inhibition of proteasomal activity and cell cycle transition blocks. Detected in liver (at protein level).

It is found in the cytoplasm. It localises to the nucleus. Functionally, component of the 20S core proteasome complex involved in the proteolytic degradation of most intracellular proteins. This complex plays numerous essential roles within the cell by associating with different regulatory particles. Associated with two 19S regulatory particles, forms the 26S proteasome and thus participates in the ATP-dependent degradation of ubiquitinated proteins. The 26S proteasome plays a key role in the maintenance of protein homeostasis by removing misfolded or damaged proteins that could impair cellular functions, and by removing proteins whose functions are no longer required. Associated with the PA200 or PA28, the 20S proteasome mediates ubiquitin-independent protein degradation. This type of proteolysis is required in several pathways including spermatogenesis (20S-PA200 complex) or generation of a subset of MHC class I-presented antigenic peptides (20S-PA28 complex). This is Proteasome subunit alpha type-7 (Psma7) from Mus musculus (Mouse).